The sequence spans 311 residues: Olfactory receptor 8G1 (311 aa).

Residues 1-25 lie on the Extracellular side of the membrane; it reads MSGENNSSVTEFILAGLSEQPELQL. Residues Asn5 and Asn6 are each glycosylated (N-linked (GlcNAc...) asparagine). The chain crosses the membrane as a helical span at residues 26–46; that stretch reads PLFLLFLGIYVVTVVGNLGMT. At 47–54 the chain is on the cytoplasmic side; sequence TLIWLSSH. A helical membrane pass occupies residues 55 to 75; sequence LHTPMYYFLSSLSFIDFCHST. Over 76–99 the chain is Extracellular; the sequence is VITPKMLVNFVTEKNIISYPECMT. A disulfide bond links Cys97 and Cys189. Residues 100–120 traverse the membrane as a helical segment; the sequence is QLYFFLVFAIAECHMLAAMAY. The Cytoplasmic segment spans residues 121–139; the sequence is DRYMAICSPLLYSVIISNK. A helical transmembrane segment spans residues 140 to 160; it reads ACFSLILGVYIIGLVCASVHT. Over 161–197 the chain is Extracellular; sequence GCMFRVQFCKFDLINHYFCDLLPLLKLSCSSIYVNKL. The chain crosses the membrane as a helical span at residues 198-217; the sequence is LILCVGAFNILVPSLTILCS. The Cytoplasmic segment spans residues 218-237; the sequence is YIFIIASILHIRSTEGRSKA. The helical transmembrane segment at 238-258 threads the bilayer; that stretch reads FSTCSSHMLAVVIFFGSAAFM. Residues 259-271 lie on the Extracellular side of the membrane; that stretch reads YLQPSSISSMDQG. A helical membrane pass occupies residues 272-292; it reads KVSSVFYTIIVPMLNPLIYSL. Residues 293-311 lie on the Cytoplasmic side of the membrane; that stretch reads RNKDVHVSLKKMLQRRTLL.

Belongs to the G-protein coupled receptor 1 family.

It localises to the cell membrane. Functionally, odorant receptor. The polypeptide is Olfactory receptor 8G1 (OR8G1) (Homo sapiens (Human)).